The following is a 332-amino-acid chain: tRNA-dihydrouridine(20/20a) synthase (332 aa).

FMN is bound by residues 22-24 (PMM) and glutamine 75. Cysteine 105 (proton donor) is an active-site residue. FMN contacts are provided by residues lysine 144, histidine 177, 217–219 (NGG), and 239–240 (GR).

It belongs to the Dus family. DusA subfamily. FMN is required as a cofactor.

The catalysed reaction is 5,6-dihydrouridine(20) in tRNA + NADP(+) = uridine(20) in tRNA + NADPH + H(+). It catalyses the reaction 5,6-dihydrouridine(20) in tRNA + NAD(+) = uridine(20) in tRNA + NADH + H(+). It carries out the reaction 5,6-dihydrouridine(20a) in tRNA + NADP(+) = uridine(20a) in tRNA + NADPH + H(+). The enzyme catalyses 5,6-dihydrouridine(20a) in tRNA + NAD(+) = uridine(20a) in tRNA + NADH + H(+). Its function is as follows. Catalyzes the synthesis of 5,6-dihydrouridine (D), a modified base found in the D-loop of most tRNAs, via the reduction of the C5-C6 double bond in target uridines. Specifically modifies U20 and U20a in tRNAs. The protein is tRNA-dihydrouridine(20/20a) synthase of Xylella fastidiosa (strain Temecula1 / ATCC 700964).